Here is a 554-residue protein sequence, read N- to C-terminus: 7-epi-sesquithujene synthase (554 aa).

Mg(2+) contacts are provided by Asp308 and Asp312. Asp308, Asp312, Arg449, and Asn452 together coordinate substrate. Positions 308 to 312 match the DDXXD motif motif; the sequence is DDMFD. 3 residues coordinate Mg(2+): Asn452, Ser456, and Glu460.

Belongs to the terpene synthase family. As to quaternary structure, monomer. It depends on Mg(2+) as a cofactor. Requires Mn(2+) as cofactor. Highly expressed in the husk. Detected in leaf sheaths and leaves.

Its subcellular location is the cytoplasm. The enzyme catalyses (2E,6E)-farnesyl diphosphate = 7-epi-sesquithujene + diphosphate. It carries out the reaction (2E,6E)-farnesyl diphosphate = (1S,5S,6R)-alpha-bergamotene + diphosphate. It catalyses the reaction (2E,6E)-farnesyl diphosphate = (E)-beta-farnesene + diphosphate. The catalysed reaction is (2E,6E)-farnesyl diphosphate = (S)-beta-bisabolene + diphosphate. The enzyme catalyses (2Z,6E)-farnesyl diphosphate = (-)-beta-curcumene + diphosphate. It carries out the reaction (2E,6E)-farnesyl diphosphate = gamma-curcumene + diphosphate. It catalyses the reaction (2E,6E)-farnesyl diphosphate = sesquisabinene A + diphosphate. It participates in secondary metabolite biosynthesis; terpenoid biosynthesis. Its function is as follows. Sesquiterpene synthase involved in the production after herbivore attack of a blend of volatiles that attracts natural enemies of herbivores. Converts farnesyl diphosphate to (S)-beta-bisabolene and 7-epi-sesquithujene, along with a mixture of more than 20 other minor sesquiterpene olefins. Can also act in vitro as a monoterpene synthase, converting geranyl diphosphate to (S)-(-)-limonene, beta-myrcene and 11 other monoterpenes. The chain is 7-epi-sesquithujene synthase from Zea mays (Maize).